A 227-amino-acid chain; its full sequence is Orotate phosphoribosyltransferase (227 aa).

Residues lysine 51, arginine 119, lysine 120, and lysine 123 each coordinate 5-phospho-alpha-D-ribose 1-diphosphate. Orotate is bound by residues threonine 149 and arginine 177.

It belongs to the purine/pyrimidine phosphoribosyltransferase family. PyrE subfamily. As to quaternary structure, homodimer. In terms of tissue distribution, expressed in body wall muscles, spermatheca and vulva muscles.

The catalysed reaction is orotidine 5'-phosphate + diphosphate = orotate + 5-phospho-alpha-D-ribose 1-diphosphate. It catalyses the reaction UMP + diphosphate = 5-phospho-alpha-D-ribose 1-diphosphate + uracil. It participates in pyrimidine metabolism; UMP biosynthesis via de novo pathway; UMP from orotate: step 1/2. Its pathway is pyrimidine metabolism; UMP biosynthesis via salvage pathway; UMP from uracil: step 1/1. Functionally, phosphoribosyltransferase which catalyzes the formation of UMP from uracil in vitro and thus may be involved in UMP biosynthesis via the salvage pathway. May also participate in the first step of UMP synthesis by catalyzing the formation of orotidine 5'-phosphate, a UMP precursor, from orotate. The protein is Orotate phosphoribosyltransferase of Caenorhabditis elegans.